Consider the following 608-residue polypeptide: MDRILARMKKSTGRRGGDKNITPVRRLERRDAARNINYDAASCSSSSAEDLSVSTSSLMTRSLEFPEPTSFRIGGGVGEMDRIYRSLGVSGPDDLAISFDAWEACKKRSSSDVVNRFKSFDLDKVRDQDLSEEGPSGVVVGSDSMNHKVQGQDLSEAGPSGGIVTELSEIGNLITPVDRLVADGVVENRRVMERTPTIVKSKGYLVPNNVVAVGVGVGGGIKGLRPPVLKPPPAMKRPPIDHRGSSWDFLTHFAPSETVKRPSSSSSSSEDGCDEEEGKEEEAEAEEMGARFIQLGDTADETCSFTTNEGDSSSTVSNTSPIYPDGGAIITSWQKGQLLGRGSFGSVYEGISGDGDFFAVKEVSLLDQGSQAQECIQQLEGEIKLLSQLQHQNIVRYRGTAKDGSNLYIFLELVTQGSLLKLYQRYQLRDSVVSLYTRQILDGLKYLHDKGFIHRDIKCANILVDANGAVKLADFGLAKVSKFNDIKSCKGTPFWMAPEVINRKDSDGYGSPADIWSLGCTVLEMCTGQIPYSDLEPVQALFRIGRGTLPEVPDTLSLDARLFILKCLKVNPEERPTAAELLNHPFVRRPLPSVGSGGSGSASPLLRR.

Over residues 1 to 13 (MDRILARMKKSTG) the composition is skewed to basic residues. The segment at 1 to 20 (MDRILARMKKSTGRRGGDKN) is disordered. The segment at 1–325 (MDRILARMKK…VSNTSPIYPD (325 aa)) is regulatory region. At Ser62 the chain carries Phosphoserine. The tract at residues 192–234 (MERTPTIVKSKGYLVPNNVVAVGVGVGGGIKGLRPPVLKPPPA) is binding with MPK4. 2 disordered regions span residues 228 to 247 (VLKPPPAMKRPPIDHRGSSW) and 256 to 287 (SETVKRPSSSSSSSEDGCDEEEGKEEEAEAEE). A compositionally biased stretch (acidic residues) spans 271 to 287 (DGCDEEEGKEEEAEAEE). Positions 333–587 (WQKGQLLGRG…AAELLNHPFV (255 aa)) constitute a Protein kinase domain. ATP is bound by residues 339-347 (LGRGSFGSV) and Lys361. Catalysis depends on Asp456, which acts as the Proton acceptor. Residue Ser603 is modified to Phosphoserine.

This sequence belongs to the protein kinase superfamily. STE Ser/Thr protein kinase family. MAP kinase kinase kinase subfamily. In terms of assembly, interacts with MKK1, MMK2 and MPK4. May form a ternary complex composed of MEKK1 and MKK1/MKK2 and MPK4. Interacts with RACK1A, RACK1B and RACK1C. Binds to CRLK1. Phosphorylated by CRLK1 in response to cold.

Its subcellular location is the cell membrane. It localises to the endosome. It catalyses the reaction L-seryl-[protein] + ATP = O-phospho-L-seryl-[protein] + ADP + H(+). It carries out the reaction L-threonyl-[protein] + ATP = O-phospho-L-threonyl-[protein] + ADP + H(+). Activated by cold via CRLK1-mediated phosphorylation and leading to elevated kinase activity towards MKK2. Its function is as follows. The MEKK1, MKK1/MKK2 and MPK4 function in a signaling pathway that modulates the expression of genes responding to biotic and abiotic stresses and also plays an important role in pathogen defense by negatively regulating innate immunity. Involved in the innate immune MAP kinase signaling cascade (MEKK1, MKK4/MKK5 and MPK3/MPK6) downstream of bacterial flagellin receptor FLS2. May be involved in the cold and salinity stress-mediated MAP kinase signaling cascade (MEKK1, MKK1/MKK2 and MPK4/MPK6). Activates by phosphorylation the downstream MKK2, MKK4 and MKK5 in a calcium-dependent manner. This chain is Mitogen-activated protein kinase kinase kinase 1 (MEKK1), found in Arabidopsis thaliana (Mouse-ear cress).